The following is a 393-amino-acid chain: Cytochrome b (393 aa).

Helical transmembrane passes span 33–53 (FGSL…FLAM), 77–98 (WFLR…YLHM), 113–133 (WNIG…GYVL), and 178–198 (FFAI…LHLL). 2 residues coordinate heme b: histidine 83 and histidine 97. Heme b contacts are provided by histidine 182 and histidine 196. An a ubiquinone-binding site is contributed by histidine 201. 4 helical membrane-spanning segments follow: residues 226 to 246 (YKDV…ALFA), 288 to 308 (LGGV…PFIH), 320 to 340 (LSQL…WIGG), and 347 to 367 (FIII…ILMP).

The protein belongs to the cytochrome b family. In terms of assembly, the cytochrome bc1 complex contains 3 respiratory subunits (MT-CYB, CYC1 and UQCRFS1), 2 core proteins (UQCRC1 and UQCRC2) and probably 6 low-molecular weight proteins. It depends on heme b as a cofactor.

The protein resides in the mitochondrion inner membrane. Component of the ubiquinol-cytochrome c reductase complex (complex III or cytochrome b-c1 complex) that is part of the mitochondrial respiratory chain. The b-c1 complex mediates electron transfer from ubiquinol to cytochrome c. Contributes to the generation of a proton gradient across the mitochondrial membrane that is then used for ATP synthesis. The sequence is that of Cytochrome b (mt-cyb) from Synbranchus marmoratus (Marbled swamp eel).